Here is a 1297-residue protein sequence, read N- to C-terminus: MATVYGIQLTNRLNTATVRRPLRLRRYDSCITTFTTPNGISQLYRALDFQPTSFQASILQTFPPLNAWSPSPQFVPDDLSLSQWKEWITERMRALATVLQRAHPLVANAGREVNPITIGLITSSFLNQRPIDGYLPFLFLARNARDPIAPLVTVDITFSDDTYVSRHVLYTPAGLKYLTLSSYDPTKPSSICTFGKHIPLYATAAFYPDETARLTILHRYNGGPPLIEHFDQPTYGPHVLIPALGSPEGYDTHLNICRLLLAEGLLDSFRLNASAGPSTAVARIDQTYHVVMNGSPDDHTQLATRLSNLSLLAVQGCQMTVQVADHPTMSDVGGFLVRLQGPGDPQRLIAYRTDQILIWQASPFPFGNNARYVRRPGRVPFTIGTTTYVPDTKTPLPFLPQYRQATVNKNNAQDSYELNVLPSLPIYSPFALTGGAFFQARDITGDPANVWPVNTLPGLPRDYFSIQSRQRRELLSRLRSHSDRSYVKDVHNISFASTVLNPVNNQIVLSEGFSMAYLGAASTHGTTDEPLIIEALKSGTVPGVPIPSKISQFGYDVANGSIMDATLAPPTGTFTFVYSDVDQVEDAGLSIVATNRAAVAVTNIALSMTTAGGLTVVKVNFPTPAFWTQLFRNHATDARALYILKPLIVNSVEVFLLFVSRATAGNLVSSPALRQFLVQLFDRSTSLSEVMAHVPLLGDVDTGVTTLGFNACRLYSPDLPTVNITPEIQTLAYQLATIVPSTSFIAREDYDGATAVTFYGKRTFLSRNRLDRLVDVPVPATNAINHQTRFTGSPVYQLFPTNPAPVTQLLWLARTTGLYTASWPRLLLSRWLICGTGPECRILSLMPPATSVTMIDSRPPAESLAAFNPAMNQYIVGNFLDPAQWVANPHDSLTAIFSLGAAFAGAGQDLVVGLTAFLRLIQPSNVQHLWLQLNTTLTSTASLPGLIEIDTRTGQYIFNGGQRTEPYAAPDAILAAIRLVYPAATTSWLTASSTMDWTEYVIGLGSSMSLDDVSTMISYSGLTPILHIDLTQRPMDVPVPLVVGVQAVIHVAAPVQQTTVIGSMAGVQVFTADGVNAPSTIGPLAVVWDPVLSRWDLTITPNQPGVLDVVVDHNGVLLNRGSTTIALPPATIVITFPQAANRDFTNAGNDAAVVCDAFYRLGVFVSVNGAFQPVNPERAAIVTAANARVLHYVYDLSDNHVLMYVCDITDNNIGRNVALPLADIFQTLFPNNTPLLASPPYPSASGRLMLNGQLFVDLDPLPPVLPPGVQIQALSTAIEPARQTAEVPGGAYTYVVV.

This sequence belongs to the aquareoviridae outer capsid VP1 protein family.

It localises to the virion. It catalyses the reaction a 5'-end diphospho-ribonucleoside in mRNA + GTP + H(+) = a 5'-end (5'-triphosphoguanosine)-ribonucleoside in mRNA + diphosphate. It carries out the reaction a 5'-end (5'-triphosphoguanosine)-ribonucleoside in mRNA + S-adenosyl-L-methionine = a 5'-end (N(7)-methyl 5'-triphosphoguanosine)-ribonucleoside in mRNA + S-adenosyl-L-homocysteine. Functionally, outer capsid protein involved in mRNA capping. Catalyzes the last 3 enzymatic activities for formation of the 5' cap structure on the viral plus-strand transcripts, namely the RNA guanylyltransferase, RNA-7N- and RNA-2'O-methyltransferase activities. The protein is Outer capsid protein VP1 (S1) of Oncorhynchus keta (Chum salmon).